The sequence spans 248 residues: Adenylate kinase isoenzyme 6 homolog HBR1 (248 aa).

Residues Gly19, Gly21, Lys22, Ser23, and Ser24 each coordinate ATP. The segment at 49-72 (NISEIAKERDCIESYDAKLDTSIV) is NMPbind. Positions 124-134 (TRNYNDLKLQE) are LID. Arg125 is a binding site for ATP. Residues 188–248 (DGVSNELNKQ…EMEHTEDIAQ (61 aa)) are disordered. Residues 202 to 238 (DSSDEGDDNSDSDEYELEEDEQEEEEEREEYDEETNE) are compositionally biased toward acidic residues. Residues 239-248 (EMEHTEDIAQ) show a composition bias toward basic and acidic residues.

The protein belongs to the adenylate kinase family. AK6 subfamily. As to quaternary structure, interacts with small ribosomal subunit protein uS11. Not a structural component of 43S pre-ribosomes, but transiently interacts with them by binding to uS11.

The protein localises to the cytoplasm. It localises to the nucleus. The enzyme catalyses AMP + ATP = 2 ADP. The catalysed reaction is ATP + H2O = ADP + phosphate + H(+). In terms of biological role, broad-specificity nucleoside monophosphate (NMP) kinase that catalyzes the reversible transfer of the terminal phosphate group between nucleoside triphosphates and monophosphates. Also has ATPase activity. Involved in the late cytoplasmic maturation steps of the 40S ribosomal particles, specifically 18S rRNA maturation. While NMP activity is not required for ribosome maturation, ATPase activity is. Associates transiently with small ribosomal subunit protein uS11. ATP hydrolysis breaks the interaction with uS11. May temporarily remove uS11 from the ribosome to enable a conformational change of the ribosomal RNA that is needed for the final maturation step of the small ribosomal subunit. Its NMP activity may have a role in nuclear energy homeostasis. Induces transcription of mating-type proteins ALPHA1 and ALPHA2 and moderately represses transcription of mating-type protein A1 in response to hemoglobin and growth signals. Involved in the induction of a high affinity fibronectin receptor by sub-inhibitory dosages of caspofungin. This is Adenylate kinase isoenzyme 6 homolog HBR1 (HBR1) from Candida albicans (strain SC5314 / ATCC MYA-2876) (Yeast).